Consider the following 1818-residue polypeptide: Integrin beta-4 (1818 aa).

The first 28 residues, 1–28 (MAGPCCSPWVKLLLLAAMLSASLPGDLA), serve as a signal peptide directing secretion. The Extracellular portion of the chain corresponds to 29–712 (NRCKKAQVKS…HKKKDCPPGS (684 aa)). The PSI domain occupies 30-74 (RCKKAQVKSCTECIRVDKSCAYCTDELFKERRCNTQAELLAAGCR). Disulfide bonds link cysteine 31/cysteine 49, cysteine 39/cysteine 457, cysteine 42/cysteine 62, cysteine 52/cysteine 73, cysteine 246/cysteine 289, cysteine 459/cysteine 478, cysteine 470/cysteine 481, and cysteine 483/cysteine 492. The VWFA domain maps to 132-310 (DLYILMDFSN…KTQDYPSVPT (179 aa)). Residues serine 140 and serine 142 each coordinate Mg(2+). Serine 142, aspartate 145, aspartate 146, and aspartate 177 together coordinate Ca(2+). Residues 195–200 (WPNSDP) are involved in NRG1- and IGF1-binding. Positions 229, 231, 233, and 234 each coordinate Ca(2+). Glutamate 234 is a binding site for Mg(2+). Asparagine 328 carries N-linked (GlcNAc...) asparagine glycosylation. Residue glutamate 351 participates in Ca(2+) binding. 4 I-EGF domains span residues 459–493 (CELQ…KTCN), 494–539 (CSTG…HFCE), 540–576 (YDNF…RSCD), and 577–617 (CPLS…TTCE). The Cell attachment site signature appears at 473–475 (RGD). Asparagine 493 carries N-linked (GlcNAc...) asparagine glycosylation. 11 disulfides stabilise this stretch: cysteine 494/cysteine 522, cysteine 505/cysteine 520, cysteine 514/cysteine 525, cysteine 527/cysteine 538, cysteine 545/cysteine 559, cysteine 553/cysteine 564, cysteine 566/cysteine 575, cysteine 577/cysteine 600, cysteine 584/cysteine 598, cysteine 592/cysteine 603, and cysteine 605/cysteine 616. Residue asparagine 581 is glycosylated (N-linked (GlcNAc...) asparagine). N-linked (GlcNAc...) asparagine glycosylation is present at asparagine 619. 4 cysteine pairs are disulfide-bonded: cysteine 628-cysteine 673, cysteine 634-cysteine 653, cysteine 637-cysteine 650, and cysteine 682-cysteine 708. N-linked (GlcNAc...) asparagine glycosylation is present at asparagine 697. Residues 713 to 733 (FWWLIPLLIFLLLLLALLLLL) form a helical membrane-spanning segment. A palmitoylated on several cysteines region spans residues 734–751 (CWKYCACCKACLGLLPCC). At 734-1818 (CWKYCACCKA…THMDQQFFQT (1085 aa)) the chain is on the cytoplasmic side. Serine 773 carries the post-translational modification Phosphoserine. One can recognise a Calx-beta domain in the interval 981-1086 (VNITIIKEQA…QVRRFQVQLS (106 aa)). The Cell attachment site motif lies at 1005-1007 (RGD). Phosphoserine occurs at positions 1071 and 1121. Positions 1115–1137 (INQTLSSPPPPHGDLGAPQNPNA) are disordered. Fibronectin type-III domains are found at residues 1131–1220 (APQN…THQE) and 1224–1323 (EPGR…TQPK). A disordered region spans residues 1402–1433 (LSASSGRSDEDGSVAGGVEGEGSGWIRGATPR). Residues 1415–1426 (VAGGVEGEGSGW) show a composition bias toward gly residues. Phosphoserine is present on residues serine 1451, serine 1454, and serine 1470. Threonine 1483 is subject to Phosphothreonine. The residue at position 1490 (serine 1490) is a Phosphoserine. Threonine 1526 is modified (phosphothreonine). Fibronectin type-III domains are found at residues 1526 to 1621 (TPTR…VHPQ) and 1639 to 1735 (APGP…SQVG). A Phosphoserine modification is found at serine 1787.

This sequence belongs to the integrin beta chain family. In terms of assembly, heterodimer of an alpha and a beta subunit. Beta-4 associates with alpha-6. Interacts (via cytoplasmic region) with COL17A1 (via cytoplasmic region). Interacts (via cytoplasmic region) with DST isoform 3 (via N-terminus). Interacts (via cytoplasmic domain) with DST (via N-terminus). Interacts with RAC1. ITGA6:ITGB4 is found in a ternary complex with NRG1 and ERBB3. ITGA6:ITGB4 is found in a ternary complex with IGF1 and IGF1R. ITGA6:ITGB4 interacts with IGF2. Interacts with TMEM268; this interaction prevents ITGB4 degradation. Palmitoylated by DHHC3 at several cysteines of the membrane-proximal region, enhancing stability and cell surface expression. Palmitoylation also promotes secondary association with tertaspanins.

Its subcellular location is the cell membrane. The protein localises to the cell junction. It is found in the hemidesmosome. Its function is as follows. Integrin alpha-6/beta-4 is a receptor for laminin. It plays a critical structural role in the hemidesmosome of epithelial cells. Is required for the regulation of keratinocyte polarity and motility. ITGA6:ITGB4 binds to NRG1 (via EGF domain) and this binding is essential for NRG1-ERBB signaling. ITGA6:ITGB4 binds to IGF1 and this binding is essential for IGF1 signaling. ITGA6:ITGB4 binds to IGF2 and this binding is essential for IGF2 signaling. This Mus musculus (Mouse) protein is Integrin beta-4 (Itgb4).